A 149-amino-acid polypeptide reads, in one-letter code: Arginine regulator (149 aa).

The protein belongs to the ArgR family.

It is found in the cytoplasm. Its pathway is amino-acid degradation; L-arginine degradation via ADI pathway. Functionally, regulates the transcription of the arc operon, involved in arginine catabolism. This Bacillus cereus (strain ATCC 14579 / DSM 31 / CCUG 7414 / JCM 2152 / NBRC 15305 / NCIMB 9373 / NCTC 2599 / NRRL B-3711) protein is Arginine regulator (argR1).